Here is a 256-residue protein sequence, read N- to C-terminus: tRNA (guanine-N(7)-)-methyltransferase (256 aa).

The interval 1–25 is disordered; the sequence is MVATGGQAQDQSQNQEPDVLNPTSA. Residues G79, 102–103, 137–138, and L157 each bind S-adenosyl-L-methionine; these read EI and NA. D160 is a catalytic residue. Residue 235–237 participates in S-adenosyl-L-methionine binding; the sequence is SEE.

This sequence belongs to the class I-like SAM-binding methyltransferase superfamily. TrmB family.

It localises to the nucleus. The catalysed reaction is guanosine(46) in tRNA + S-adenosyl-L-methionine = N(7)-methylguanosine(46) in tRNA + S-adenosyl-L-homocysteine. The protein operates within tRNA modification; N(7)-methylguanine-tRNA biosynthesis. Its function is as follows. Catalyzes the formation of N(7)-methylguanine at position 46 (m7G46) in tRNA. The sequence is that of tRNA (guanine-N(7)-)-methyltransferase from Drosophila simulans (Fruit fly).